Here is a 624-residue protein sequence, read N- to C-terminus: Probable potassium transport system protein Kup 1 (624 aa).

12 helical membrane-spanning segments follow: residues 10–30 (LALGALGVVFGDIGTSPLYAL), 48–68 (LSLIFWSLIIIVSFKYLMIIF), 94–114 (PLFYIVAIFGAGLLLGDGMLT), 133–153 (LYPYVLPIASVILVLLFSLQA), 159–179 (IGYLFGPLILIWFITIAILGI), 210–230 (FLLGGIFLVVTGGEALFADIG), 242–262 (FFIALPCLLLNYFGQGANLIV), 270–290 (PFFMIAPPWFYLPLIIIATVA), 331–351 (IYVPQINFILFIGTMAFCLAF), 363–383 (IAVNLEMLLVDAMVAYAAVSI), 388–408 (TFNVIFLFGLFLLIDLAFLGA), and 413–433 (FITGGWVPIVLAFFIAFIMYS).

This sequence belongs to the HAK/KUP transporter (TC 2.A.72) family.

It localises to the cell inner membrane. It carries out the reaction K(+)(in) + H(+)(in) = K(+)(out) + H(+)(out). Transport of potassium into the cell. Likely operates as a K(+):H(+) symporter. The polypeptide is Probable potassium transport system protein Kup 1 (Legionella pneumophila subsp. pneumophila (strain Philadelphia 1 / ATCC 33152 / DSM 7513)).